Consider the following 269-residue polypeptide: Hydroxyethylthiazole kinase (269 aa).

Methionine 45 contributes to the substrate binding site. ATP is bound by residues arginine 121 and threonine 167. Glycine 194 contacts substrate.

The protein belongs to the Thz kinase family. Mg(2+) is required as a cofactor.

The enzyme catalyses 5-(2-hydroxyethyl)-4-methylthiazole + ATP = 4-methyl-5-(2-phosphooxyethyl)-thiazole + ADP + H(+). It participates in cofactor biosynthesis; thiamine diphosphate biosynthesis; 4-methyl-5-(2-phosphoethyl)-thiazole from 5-(2-hydroxyethyl)-4-methylthiazole: step 1/1. In terms of biological role, catalyzes the phosphorylation of the hydroxyl group of 4-methyl-5-beta-hydroxyethylthiazole (THZ). This chain is Hydroxyethylthiazole kinase, found in Bacillus cytotoxicus (strain DSM 22905 / CIP 110041 / 391-98 / NVH 391-98).